The sequence spans 207 residues: Small ribosomal subunit protein uS4 (207 aa).

The tract at residues 31 to 53 is disordered; that stretch reads KAKFDSKPGQHGRTSGTRTSDFG. The segment covering 42–52 has biased composition (polar residues); sequence GRTSGTRTSDF. Residues 97 to 158 enclose the S4 RNA-binding domain; the sequence is SRLDNVVYRM…KSKKQTRVTE (62 aa).

The protein belongs to the universal ribosomal protein uS4 family. As to quaternary structure, part of the 30S ribosomal subunit. Contacts protein S5. The interaction surface between S4 and S5 is involved in control of translational fidelity.

One of the primary rRNA binding proteins, it binds directly to 16S rRNA where it nucleates assembly of the body of the 30S subunit. Functionally, with S5 and S12 plays an important role in translational accuracy. The sequence is that of Small ribosomal subunit protein uS4 from Polaromonas sp. (strain JS666 / ATCC BAA-500).